A 9702-amino-acid chain; its full sequence is Nonribosomal peptide synthetase ungA (9702 aa).

The adenylation 1 stretch occupies residues 248–647 (EQAQLRPHAP…ARKDTQVKIR (400 aa)). The region spanning 775 to 852 (APQTEMEYRL…MARAAQEKQT (78 aa)) is the Carrier 1 domain. Serine 812 carries the post-translational modification O-(pantetheine 4'-phosphoryl)serine. Residues 891-1288 (DILPCTPLQE…EAVLRHVCSQ (398 aa)) are condensation 1. An adenylation 2 region spans residues 1330-1730 (QRTQQQPDAP…GRKDTQVKIR (401 aa)). Residues 1857–1933 (LPQSPMEKSL…RLARREIQTD (77 aa)) form the Carrier 2 domain. Serine 1894 is subject to O-(pantetheine 4'-phosphoryl)serine. The segment at 1946–2374 (PFALSPIQQF…ERALEGTAVQ (429 aa)) is epimerization 1. Residues 2414–2842 (EDIYPCSPLQ…LDTAILSPQD (429 aa)) form a condensation 2 region. Positions 2868–3267 (QVERQPDALA…GRKDTQVKIR (400 aa)) are adenylation 3. Residues 3397–3473 (APTTEMERHL…EMSQVAKLGS (77 aa)) enclose the Carrier 3 domain. Serine 3434 is subject to O-(pantetheine 4'-phosphoryl)serine. A condensation 3 region spans residues 3512 to 3920 (EDVFPCTPLQ…LLCDASHHQS (409 aa)). An adenylation 4 region spans residues 3957–4361 (KQTQRRSAAQ…GRKDAQVKIR (405 aa)). Residues 4491–4568 (PPTTDLERQI…LALSVSAAVD (78 aa)) enclose the Carrier 4 domain. Serine 4528 bears the O-(pantetheine 4'-phosphoryl)serine mark. Positions 4583–5013 (ALSPIQQMFA…QAAAQALPLL (431 aa)) are epimerization 2. The tract at residues 5049–5474 (VEDIYPCSPL…ANIISHQDLE (426 aa)) is condensation 4. The segment at 5496–5899 (MQQAESQPGA…GRKDNQVKIH (404 aa)) is adenylation 5. A Carrier 5 domain is found at 6033–6110 (TASSPEELEL…LVSHAQGNTA (78 aa)). An O-(pantetheine 4'-phosphoryl)serine modification is found at serine 6070. The epimerization 3 stretch occupies residues 6127–6551 (ELSPIQQLFF…CKSSLEAAAA (425 aa)). A condensation 5 region spans residues 6593–6935 (VEDIYPCAPI…TGISVQGGAA (343 aa)). The segment at 7047-7447 (KRPDAPAIDA…GRRDNQVKVR (401 aa)) is adenylation 6. In terms of domain architecture, Carrier 6 spans 7575 to 7655 (GPQTEVERLL…RSARTVQGHV (81 aa)). Serine 7613 carries the O-(pantetheine 4'-phosphoryl)serine modification. Positions 7670 to 8106 (DLAPVQQMFA…LVTASELLMQ (437 aa)) are epimerization 4. The condensation 6 stretch occupies residues 8144–8588 (VEDIYPCSPI…EVDLSTDHDQ (445 aa)). Positions 8612–9025 (NTVQKQPHST…GRKDSQVKIR (414 aa)) are adenylation 7. Positions 9158–9236 (SPTAPMERRL…LALLVREGDA (79 aa)) constitute a Carrier 7 domain. O-(pantetheine 4'-phosphoryl)serine is present on serine 9196. The condensation 7 stretch occupies residues 9282 to 9629 (DVYPTTDLQN…DNLEHDPGTA (348 aa)).

Belongs to the NRP synthetase family.

Its pathway is secondary metabolite biosynthesis. Its function is as follows. Nonribosomal peptide synthetase; part of the gene cluster that mediates the biosynthesis of the unguisins, gamma-aminobutyric acid (GABA)-containing fungal cyclic heptapeptides with the amino acid sequence cyclo-(D-Ala1-D-Val2-L-Phe3-D-Val4-D-Ala5-D-Trp6-GABA7) for unguisin A and cyclo-(D-Ala1-D-Val2-L-Leu3-D-Val4-D-Ala5-D-Trp6-GABA7) for unguisin B. UngA is the main enzyme within the cluster which condenses the 7 residues using its respective 7 modules. The terminal condensation domain (Ct) is involved in cyclization with D-alanine and thereby releasing of unguisins A and B. The alanine racemase ungC provides D-alanine, which is then accepted by the first adenylation domain of ungA. Finally, the hydrolase ungD catalyzes the hydrolysis between the D-tryptophan and GABA residues of unguisins A and B to produce the corresponding linear peptides. This Aspergillus violaceofuscus (strain CBS 115571) protein is Nonribosomal peptide synthetase ungA.